The chain runs to 216 residues: UPF0502 protein VCM66_A0698 (216 aa).

Belongs to the UPF0502 family.

This Vibrio cholerae serotype O1 (strain M66-2) protein is UPF0502 protein VCM66_A0698.